We begin with the raw amino-acid sequence, 260 residues long: Acetylglutamate kinase (260 aa).

Residues 45–46, Arg-67, and Asn-159 contribute to the substrate site; that span reads GG.

Belongs to the acetylglutamate kinase family. ArgB subfamily.

It is found in the cytoplasm. It carries out the reaction N-acetyl-L-glutamate + ATP = N-acetyl-L-glutamyl 5-phosphate + ADP. Its pathway is amino-acid biosynthesis; L-arginine biosynthesis; N(2)-acetyl-L-ornithine from L-glutamate: step 2/4. Functionally, catalyzes the ATP-dependent phosphorylation of N-acetyl-L-glutamate. This chain is Acetylglutamate kinase, found in Colwellia psychrerythraea (strain 34H / ATCC BAA-681) (Vibrio psychroerythus).